Reading from the N-terminus, the 186-residue chain is Ribosome-recycling factor (186 aa).

Positions Glu144–Lys163 are disordered.

The protein belongs to the RRF family.

The protein resides in the cytoplasm. Functionally, responsible for the release of ribosomes from messenger RNA at the termination of protein biosynthesis. May increase the efficiency of translation by recycling ribosomes from one round of translation to another. This is Ribosome-recycling factor from Rhizobium johnstonii (strain DSM 114642 / LMG 32736 / 3841) (Rhizobium leguminosarum bv. viciae).